The primary structure comprises 57 residues: DNA-directed RNA polymerase subunit Rpo6 (57 aa).

The protein belongs to the archaeal Rpo6/eukaryotic RPB6 RNA polymerase subunit family. In terms of assembly, part of the RNA polymerase complex.

It localises to the cytoplasm. It catalyses the reaction RNA(n) + a ribonucleoside 5'-triphosphate = RNA(n+1) + diphosphate. Its function is as follows. DNA-dependent RNA polymerase (RNAP) catalyzes the transcription of DNA into RNA using the four ribonucleoside triphosphates as substrates. The polypeptide is DNA-directed RNA polymerase subunit Rpo6 (Thermococcus gammatolerans (strain DSM 15229 / JCM 11827 / EJ3)).